The chain runs to 222 residues: Ras-related protein RabT1 (222 aa).

Position 37–44 (37–44) interacts with GTP; it reads GDNKTGKS. Residues 59–66 carry the Effector region motif; that stretch reads VSSIGVDF. GTP is bound by residues 85 to 89 and 145 to 148; these read DVNSC and NKCD. Cysteine 219 is modified (cysteine methyl ester). The S-geranylgeranyl cysteine moiety is linked to residue cysteine 219. Residues 220–222 constitute a propeptide, removed in mature form; that stretch reads NIL.

This sequence belongs to the small GTPase superfamily. Rab family.

The protein resides in the cell membrane. The sequence is that of Ras-related protein RabT1 (rabT1) from Dictyostelium discoideum (Social amoeba).